The sequence spans 153 residues: Arginine repressor (153 aa).

Belongs to the ArgR family.

It localises to the cytoplasm. Its pathway is amino-acid biosynthesis; L-arginine biosynthesis [regulation]. Functionally, regulates arginine biosynthesis genes. This chain is Arginine repressor, found in Actinobacillus pleuropneumoniae serotype 5b (strain L20).